A 407-amino-acid chain; its full sequence is Peptidase T (407 aa).

H82 contacts Zn(2+). Residue D84 is part of the active site. Zn(2+) is bound at residue D143. E177 acts as the Proton acceptor in catalysis. Zn(2+) is bound by residues E178, D200, and H382.

This sequence belongs to the peptidase M20B family. Zn(2+) serves as cofactor.

It is found in the cytoplasm. The enzyme catalyses Release of the N-terminal residue from a tripeptide.. In terms of biological role, cleaves the N-terminal amino acid of tripeptides. This is Peptidase T from Streptococcus thermophilus (strain ATCC BAA-491 / LMD-9).